A 1030-amino-acid polypeptide reads, in one-letter code: Semaphorin-6A (1030 aa).

The first 18 residues, 1–18 (MRSEALLLYFTLLHFAGA), serve as a signal peptide directing secretion. Over 19 to 649 (GFPEDSEPIS…KGHDQLVPVT (631 aa)) the chain is Extracellular. One can recognise a Sema domain in the interval 24-512 (SEPISISHGN…FSTCVIKVPL (489 aa)). N-linked (GlcNAc...) asparagine glycosylation is found at Asn-33, Asn-49, and Asn-65. 4 cysteine pairs are disulfide-bonded: Cys-107-Cys-117, Cys-135-Cys-144, Cys-258-Cys-369, and Cys-283-Cys-328. N-linked (GlcNAc...) asparagine glycosylation is present at Asn-282. N-linked (GlcNAc...) asparagine glycans are attached at residues Asn-434 and Asn-461. 4 cysteine pairs are disulfide-bonded: Cys-477/Cys-506, Cys-515/Cys-533, Cys-521/Cys-568, and Cys-525/Cys-542. A helical membrane pass occupies residues 650–670 (LLAIAVILAFVMGAVFSGITV). At 671–1030 (YCVCDHRRKD…TSMKPNDACT (360 aa)) the chain is on the cytoplasmic side. Ser-698 is modified (phosphoserine). Disordered stretches follow at residues 754–778 (ALPT…REWE), 860–897 (SSKS…SLSQ), and 912–1030 (YGVD…DACT). The segment covering 920–936 (YPTNSLTRSHQATTLKR) has biased composition (polar residues). Positions 937–952 (NNTNSSNSSHLSRNQS) are enriched in low complexity. Position 952 is a phosphoserine (Ser-952). 2 stretches are compositionally biased toward polar residues: residues 970-997 (QVHS…SLTR) and 1018-1030 (PLST…DACT).

This sequence belongs to the semaphorin family. Active as a homodimer or oligomer. The SEMA6A homodimer interacts with a PLXNA2 homodimer, giving rise to a heterotetramer. Interacts with EVL. In terms of assembly, (Microbial infection) Interacts with P.sordellii toxin TcsL; semaphorins SEMA6A and SEMA6B constitute the major host receptors for TcsL in the vascular endothelium.

The protein resides in the cell membrane. Cell surface receptor for PLXNA2 that plays an important role in cell-cell signaling. Required for normal granule cell migration in the developing cerebellum. Promotes reorganization of the actin cytoskeleton and plays an important role in axon guidance in the developing central nervous system. Can act as repulsive axon guidance cue. Has repulsive action towards migrating granular neurons. May play a role in channeling sympathetic axons into the sympathetic chains and controlling the temporal sequence of sympathetic target innervation. In terms of biological role, (Microbial infection) Acts as a receptor for P.sordellii toxin TcsL in the in the vascular endothelium. This chain is Semaphorin-6A (SEMA6A), found in Homo sapiens (Human).